A 69-amino-acid polypeptide reads, in one-letter code: DNA-directed RNA polymerase subunit epsilon (69 aa).

It belongs to the RNA polymerase subunit epsilon family. RNAP is composed of a core of 2 alpha, a beta and a beta' subunit. The core is associated with a delta subunit, and at least one of epsilon or omega. When a sigma factor is associated with the core the holoenzyme is formed, which can initiate transcription.

It carries out the reaction RNA(n) + a ribonucleoside 5'-triphosphate = RNA(n+1) + diphosphate. In terms of biological role, a non-essential component of RNA polymerase (RNAP). This Geobacillus sp. (strain WCH70) protein is DNA-directed RNA polymerase subunit epsilon.